Consider the following 87-residue polypeptide: Small ribosomal subunit protein bS16 (87 aa).

The protein belongs to the bacterial ribosomal protein bS16 family.

This is Small ribosomal subunit protein bS16 from Aster yellows witches'-broom phytoplasma (strain AYWB).